We begin with the raw amino-acid sequence, 374 residues long: MQFQSVGNCAPCKDPCPLKSFCDPGLSNTCNIQPFVNPFGPRRAVATWKVNYLISNRNVLAAHCDPDLINPWGIVIYNNQLWVVCNNTDSITNYDLFGNKLLGTISIRNASHNPSYPTGIAINCGGGFSISTGNISRGGLMLTCSEHGTCHSFNPVVDPLHSFIVLNQQITGEVSVYRGLCIANNTLYLADFFQRHIDVFDQNFNRLIGYPFVDNDGSDPIPLNYGPSNIVNIGCFLYILWAKKDPNITLYAVDEPGAGYISVFNLDGSFVRRFTSRGVLNNPWGMIPAPAECGFPPGSFLVGNHGDGRINIFDCNGRYVGPVLAMTGLPLVIDGIRGLAPHYTDFSEIYFSAACDEMTDGLVGSLVKDQVIYF.

It belongs to the mimivirus R640 family.

Its subcellular location is the virion. This is an uncharacterized protein from Acanthamoeba polyphaga (Amoeba).